The primary structure comprises 548 residues: T-complex protein 1 subunit theta (548 aa).

N-acetylalanine is present on A2. S23 is subject to Phosphoserine. At Y30 the chain carries Phosphotyrosine. ADP is bound by residues Y47 and G48. Residue D99 coordinates Mg(2+). ADP-binding residues include G100, T101, N102, and F103. ATP-binding residues include G100, T101, and N102. The residue at position 162 (S162) is a Phosphoserine. The ADP site is built by M169, S170, and K171. ATP-binding residues include S170 and K171. Glycyl lysine isopeptide (Lys-Gly) (interchain with G-Cter in SUMO2) cross-links involve residues K224, K254, and K260. Residues S269 and S317 each carry the phosphoserine modification. N6-acetyllysine occurs at positions 318 and 400. An ADP-binding site is contributed by G412. G412 lines the ATP pocket. K459 participates in a covalent cross-link: Glycyl lysine isopeptide (Lys-Gly) (interchain with G-Cter in SUMO1). K466 bears the N6-acetyllysine mark. D499 is an ADP binding site. D499 and K504 together coordinate ATP. A Phosphotyrosine modification is found at Y505. Residues P529 to D548 form a disordered region. K534 is covalently cross-linked (Glycyl lysine isopeptide (Lys-Gly) (interchain with G-Cter in SUMO2)). Position 537 is a phosphoserine (S537). K539 is covalently cross-linked (Glycyl lysine isopeptide (Lys-Gly) (interchain with G-Cter in SUMO2)).

Belongs to the TCP-1 chaperonin family. In terms of assembly, component of the chaperonin-containing T-complex (TRiC), a hexadecamer composed of two identical back-to-back stacked rings enclosing a protein folding chamber. Each ring is made up of eight different subunits: TCP1/CCT1, CCT2, CCT3, CCT4, CCT5, CCT6A/CCT6, CCT7, CCT8. Interacts with PACRG. Interacts with DNAAF4. Interacts with synaptic plasticity regulator PANTS.

The protein resides in the cytoplasm. It localises to the cytoskeleton. It is found in the microtubule organizing center. Its subcellular location is the centrosome. The protein localises to the cilium basal body. It catalyses the reaction ATP + H2O = ADP + phosphate + H(+). Functionally, component of the chaperonin-containing T-complex (TRiC), a molecular chaperone complex that assists the folding of actin, tubulin and other proteins upon ATP hydrolysis. The TRiC complex mediates the folding of WRAP53/TCAB1, thereby regulating telomere maintenance. As part of the TRiC complex may play a role in the assembly of BBSome, a complex involved in ciliogenesis regulating transports vesicles to the cilia. The protein is T-complex protein 1 subunit theta (Cct8) of Mus musculus (Mouse).